A 312-amino-acid polypeptide reads, in one-letter code: MPSLPTLIFIAIFCLESLAAMLQNGFLVTMLGREWVRCRMLSTSDMIVACLAASRFCLHGVAMANNLLASLDFSRAVPYMNIFWDLFNALTLWFTALLAAFYCVKISSFSHPTFAWLKWRISRLVPKLIKGSLIICGLEVISSATGNILFGQRKVSLSSYRNETLVYRVQASFQLYFFLYDGFVWSIPFLLFLVSTVLLIVSLCWQLGQMRDLRPGPCDPSTQAYTMALKSLTFSLIFCTLYFLSLFASALKIINFQNHWHWAWEVLIYANICLHSTVLVLRSPKLKKGLKTWPQLQCPCDAGSQGFGRCWP.

Topologically, residues 1-4 (MPSL) are extracellular. The helical transmembrane segment at 5–27 (PTLIFIAIFCLESLAAMLQNGFL) threads the bilayer. Residues 28–39 (VTMLGREWVRCR) lie on the Cytoplasmic side of the membrane. The chain crosses the membrane as a helical span at residues 40–62 (MLSTSDMIVACLAASRFCLHGVA). The Extracellular portion of the chain corresponds to 63 to 81 (MANNLLASLDFSRAVPYMN). Residues 82 to 104 (IFWDLFNALTLWFTALLAAFYCV) traverse the membrane as a helical segment. Over 105–127 (KISSFSHPTFAWLKWRISRLVPK) the chain is Cytoplasmic. A helical membrane pass occupies residues 128–150 (LIKGSLIICGLEVISSATGNILF). Residues 151-182 (GQRKVSLSSYRNETLVYRVQASFQLYFFLYDG) are Extracellular-facing. Residue N162 is glycosylated (N-linked (GlcNAc...) asparagine). A helical membrane pass occupies residues 183-205 (FVWSIPFLLFLVSTVLLIVSLCW). Over 206–231 (QLGQMRDLRPGPCDPSTQAYTMALKS) the chain is Cytoplasmic. The helical transmembrane segment at 232 to 254 (LTFSLIFCTLYFLSLFASALKII) threads the bilayer. At 255–258 (NFQN) the chain is on the extracellular side. A helical membrane pass occupies residues 259 to 281 (HWHWAWEVLIYANICLHSTVLVL). Over 282-312 (RSPKLKKGLKTWPQLQCPCDAGSQGFGRCWP) the chain is Cytoplasmic.

The protein belongs to the G-protein coupled receptor T2R family.

The protein localises to the membrane. Functionally, receptor that may play a role in the perception of bitterness and is gustducin-linked. May play a role in sensing the chemical composition of the gastrointestinal content. The activity of this receptor may stimulate alpha gustducin, mediate PLC-beta-2 activation and lead to the gating of TRPM5. In Pan paniscus (Pygmy chimpanzee), this protein is Taste receptor type 2 member 62 (TAS2R62).